A 509-amino-acid chain; its full sequence is Protein MAIN-LIKE 1 (509 aa).

The interval 477–509 is disordered; it reads GYGKRRRRNEHTPTPNNGGGNDISSLLLQKEDS. The span at 488–503 shows a compositional bias: polar residues; sequence TPTPNNGGGNDISSLL.

Expressed in root tips, the shoot apical meristem (SAM), leaves, mature flowers and embryos.

It is found in the nucleus. Functionally, acts as an important factor for cell fate determination and maintenance throughout plant development. Required for the organization of the root apical meristem (RAM) and the shoot apical meristem (SAM). Required to maintain genome stability and cell division activity in meristematic cells. The sequence is that of Protein MAIN-LIKE 1 from Arabidopsis thaliana (Mouse-ear cress).